The chain runs to 313 residues: 2,3-dihydroxyphenylpropionate/2,3-dihydroxicinnamic acid 1,2-dioxygenase (313 aa).

The active-site Proton donor is histidine 115. Residue histidine 179 is the Proton acceptor of the active site.

The protein belongs to the LigB/MhpB extradiol dioxygenase family. As to quaternary structure, homotetramer. Fe(2+) is required as a cofactor.

The catalysed reaction is 3-(2,3-dihydroxyphenyl)propanoate + O2 = (2Z,4E)-2-hydroxy-6-oxonona-2,4-dienedioate + H(+). The enzyme catalyses (2E)-3-(2,3-dihydroxyphenyl)prop-2-enoate + O2 = (2Z,4E,7E)-2-hydroxy-6-oxonona-2,4,7-trienedioate + H(+). It participates in aromatic compound metabolism; 3-phenylpropanoate degradation. Functionally, catalyzes the non-heme iron(II)-dependent oxidative cleavage of 2,3-dihydroxyphenylpropionic acid and 2,3-dihydroxicinnamic acid into 2-hydroxy-6-ketononadienedioate and 2-hydroxy-6-ketononatrienedioate, respectively. This chain is 2,3-dihydroxyphenylpropionate/2,3-dihydroxicinnamic acid 1,2-dioxygenase, found in Mycolicibacterium smegmatis (strain ATCC 700084 / mc(2)155) (Mycobacterium smegmatis).